We begin with the raw amino-acid sequence, 292 residues long: uncharacterized protein (292 aa).

Transmembrane regions (helical) follow at residues 6–26 (LGIISVTLIWGYTWVAMKVGI), 32–52 (LLFSGLRLFIGAVPLFLILFI), 68–88 (IIMSLLMGLGYMGILTYGMQF), 94–114 (TSVLVYTMPIFVTVISHFSLN), 123–143 (MGLVCGLFGLLFIFGKEMLNI), 147–167 (ALFGELCVLVAALSWGIANVF), 182–202 (AWHLMMGAVMLLVFSFIFEAV), 214–234 (SLLFNGLLSTGFTFVVWFWVL), 242–262 (ASMALMFVPVLALFFGWLQLH), and 265–285 (ITINIILGALLICCGIFMNTF). EamA domains follow at residues 13 to 137 (LIWG…FIFG) and 159 to 285 (LSWG…MNTF).

The protein belongs to the EamA transporter family.

Its subcellular location is the cell membrane. This is an uncharacterized protein from Bacillus subtilis (strain 168).